The chain runs to 266 residues: Na(+)-translocating NADH-quinone reductase subunit C (266 aa).

A helical transmembrane segment spans residues 16-36 (LLVVVILCLVCSVVVAGAAVG). The residue at position 232 (Thr232) is an FMN phosphoryl threonine.

Belongs to the NqrC family. In terms of assembly, composed of six subunits; NqrA, NqrB, NqrC, NqrD, NqrE and NqrF. The cofactor is FMN.

Its subcellular location is the cell inner membrane. It carries out the reaction a ubiquinone + n Na(+)(in) + NADH + H(+) = a ubiquinol + n Na(+)(out) + NAD(+). NQR complex catalyzes the reduction of ubiquinone-1 to ubiquinol by two successive reactions, coupled with the transport of Na(+) ions from the cytoplasm to the periplasm. NqrA to NqrE are probably involved in the second step, the conversion of ubisemiquinone to ubiquinol. The sequence is that of Na(+)-translocating NADH-quinone reductase subunit C from Yersinia pestis.